Reading from the N-terminus, the 153-residue chain is NADH dehydrogenase [ubiquinone] 1 beta subcomplex subunit 11, mitochondrial (153 aa).

Residues 1-29 constitute a mitochondrion transit peptide; the sequence is MAAGLFGLSARRLLAAAATRGLPAARVRW. The interval 49–72 is disordered; sequence PEPTTQWQEDLDPEDENLYEKNPD. The helical transmembrane segment at 89–109 threads the bilayer; that stretch reads LVFFFGVSIILVLGSTFVAYL.

This sequence belongs to the complex I NDUFB11 subunit family. In terms of assembly, complex I is composed of 45 different subunits. Interacts with BCAP31.

It is found in the mitochondrion inner membrane. In terms of biological role, accessory subunit of the mitochondrial membrane respiratory chain NADH dehydrogenase (Complex I), that is believed not to be involved in catalysis. Complex I functions in the transfer of electrons from NADH to the respiratory chain. The immediate electron acceptor for the enzyme is believed to be ubiquinone. The sequence is that of NADH dehydrogenase [ubiquinone] 1 beta subcomplex subunit 11, mitochondrial (NDUFB11) from Pongo pygmaeus (Bornean orangutan).